The primary structure comprises 288 residues: Pantothenate synthetase (288 aa).

30 to 37 (MGNLHAGH) is an ATP binding site. His-37 functions as the Proton donor in the catalytic mechanism. Gln-61 provides a ligand contact to (R)-pantoate. Residue Gln-61 coordinates beta-alanine. 149-152 (GLKD) is an ATP binding site. Position 155 (Gln-155) interacts with (R)-pantoate. ATP is bound by residues Ile-178 and 186-189 (LSSR).

The protein belongs to the pantothenate synthetase family. In terms of assembly, homodimer.

It localises to the cytoplasm. The catalysed reaction is (R)-pantoate + beta-alanine + ATP = (R)-pantothenate + AMP + diphosphate + H(+). It participates in cofactor biosynthesis; (R)-pantothenate biosynthesis; (R)-pantothenate from (R)-pantoate and beta-alanine: step 1/1. Catalyzes the condensation of pantoate with beta-alanine in an ATP-dependent reaction via a pantoyl-adenylate intermediate. This chain is Pantothenate synthetase, found in Colwellia psychrerythraea (strain 34H / ATCC BAA-681) (Vibrio psychroerythus).